Reading from the N-terminus, the 306-residue chain is 4-hydroxybenzoate geranyltransferase 2 (306 aa).

A run of 8 helical transmembrane segments spans residues 38–58, 61–81, 119–139, 153–173, 178–198, 229–249, 251–271, and 285–305; these read IGSWLLAWPAFWSVALIADLG, PKMLAIFGWWAVWIRGAGCTI, LFIGLGVLYQFNILTLALAIV, ITYWPQAFLGVMISWGALLGS, GSVVPSIAYPLYISSFFWTLV, IWITWFGIGCIGALLLGGFIV, IGLPYYVFLAIATGQLIWQIF, and FVSNQWFGAIIFTGILVGRLF.

This sequence belongs to the UbiA prenyltransferase family. Mg(2+) serves as cofactor. As to expression, expressed only in roots.

Its subcellular location is the endoplasmic reticulum membrane. It catalyses the reaction 4-hydroxybenzoate + (2E)-geranyl diphosphate = 3-geranyl-4-hydroxybenzoate + diphosphate. In terms of biological role, prenyltransferase involved in the biosynthesis of shikonin, a naphthoquinone secondary metabolite. Could accept only geranyl diphosphate and not dimethylallyl diphosphate, farnesyl diphosphate, or geranylgeranyl diphosphate as substrate. This is 4-hydroxybenzoate geranyltransferase 2 (PGT-2) from Lithospermum erythrorhizon (Purple gromwell).